The following is a 268-amino-acid chain: MYTPRQSLYIRGSAGDPLPPVWAALDQKGTHLRRGQLVLVCAGPGTGKSAFVLAYALKSKVPTLYFSADSDAFTQLSRSVSILSGWSLERATRAVREQNIEDAVADSLDEIPIRFNYKASPSLDEIENALAAYDALYEDFPALIVVDNITNVRTDSSEGDDPFSGLESLMDYLHEMGRETGSCVVGLHHVTGPHNDGDKPIPLSGIKGQIGRVPEMILTLHRVSDGFGPDMLNVSTVKNRGGKSDPSGQDFASLEFVGDTMQINDFGH.

The chain is Gene 65 protein (65) from Mycobacterium (Mycobacteriophage L5).